A 572-amino-acid polypeptide reads, in one-letter code: Delta-1-pyrroline-5-carboxylate dehydrogenase, mitochondrial (572 aa).

Residue 300–305 (GQISTR) coordinates NAD(+). Glutamate 320 functions as the Proton acceptor in the catalytic mechanism. Catalysis depends on cysteine 354, which acts as the Nucleophile.

The protein belongs to the aldehyde dehydrogenase family.

Its subcellular location is the mitochondrion matrix. The catalysed reaction is L-glutamate 5-semialdehyde + NAD(+) + H2O = L-glutamate + NADH + 2 H(+). The protein operates within amino-acid degradation; L-proline degradation into L-glutamate; L-glutamate from L-proline: step 2/2. This chain is Delta-1-pyrroline-5-carboxylate dehydrogenase, mitochondrial (prnC), found in Emericella nidulans (strain FGSC A4 / ATCC 38163 / CBS 112.46 / NRRL 194 / M139) (Aspergillus nidulans).